Reading from the N-terminus, the 94-residue chain is Defensin alpha 5 (94 aa).

A signal peptide spans 1–19; that stretch reads MRTIAILAAILLVALQAQA. Intrachain disulfides connect C65–C93, C67–C82, and C72–C92.

It belongs to the alpha-defensin family. In terms of assembly, homodimer. Homotetramer. Interacts with B.antracis lef/lethal factor. Glycosylated. In terms of processing, proteolytically cleaved at Arg-62 by trypsin. Both the propeptide form proHD5/HD5(20-94) and HD5(56-94) are cleaved into the lumenal peptide form HD5(63-94) by trypsin. Unprocessed proHD5 exerts antimicrobial activities, but peptide potency is enhanced by peptide processing. Proteolytically cleaved in duodenal fluid; derived fragments are antimicrobially active against commensal bacteria (in vitro).

The protein localises to the secreted. It is found in the cytoplasmic vesicle. The protein resides in the secretory vesicle. Functionally, host-defense peptide that maintains sterility in the urogenital system. Has antimicrobial activity against a wide range of bacteria, including Gram-negative E.coli, P.aeruginosa and S.typhimurium, and Gram-positive E.aerogenes, S.aureus, B.cereus, E.faecium and L.monocytogenes. Confers resistance to intestinal infection by S.typhimurium. Exhibits antimicrobial activity against enteric commensal bacteria such as B.adolescentis, L.acidophilus, B.breve, L.fermentum, B.longum and S.thermophilus. Binds to bacterial membranes and causes membrane disintegration. Induces the secretion of the chemokine IL-8 by intestinal epithelial cells. Binds to B.antracis lef/lethal factor, a major virulence factor from B.anthracis, and neutralizes its enzymatic activity. In Pan troglodytes (Chimpanzee), this protein is Defensin alpha 5 (DEFA5).